Reading from the N-terminus, the 366-residue chain is Peptide chain release factor 2 (366 aa).

Q251 is modified (N5-methylglutamine).

Belongs to the prokaryotic/mitochondrial release factor family. Methylated by PrmC. Methylation increases the termination efficiency of RF2.

It localises to the cytoplasm. Functionally, peptide chain release factor 2 directs the termination of translation in response to the peptide chain termination codons UGA and UAA. The polypeptide is Peptide chain release factor 2 (prfB) (Listeria monocytogenes serotype 4b (strain F2365)).